The primary structure comprises 660 residues: Translation factor GUF1, mitochondrial (660 aa).

The N-terminal 42 residues, 1–42, are a transit peptide targeting the mitochondrion; it reads MRSCVRTASSVLQSWRAHTVLRNGCPLPSRTLERLPRLARSY. One can recognise a tr-type G domain in the interval 62-242; sequence ERYRNFCIVA…AVVEKIPAPV (181 aa). GTP-binding positions include 71–78, 135–139, and 189–192; these read AHVDHGKS, DTPGH, and NKVD.

The protein belongs to the TRAFAC class translation factor GTPase superfamily. Classic translation factor GTPase family. LepA subfamily.

The protein localises to the mitochondrion inner membrane. It catalyses the reaction GTP + H2O = GDP + phosphate + H(+). Functionally, promotes mitochondrial protein synthesis. May act as a fidelity factor of the translation reaction, by catalyzing a one-codon backward translocation of tRNAs on improperly translocated ribosomes. Binds to mitochondrial ribosomes in a GTP-dependent manner. The sequence is that of Translation factor GUF1, mitochondrial from Phaeosphaeria nodorum (strain SN15 / ATCC MYA-4574 / FGSC 10173) (Glume blotch fungus).